The following is a 77-amino-acid chain: Large ribosomal subunit protein bL28 (77 aa).

It belongs to the bacterial ribosomal protein bL28 family.

This is Large ribosomal subunit protein bL28 from Dechloromonas aromatica (strain RCB).